Here is a 446-residue protein sequence, read N- to C-terminus: Probable glucuronosyltransferase Os04g0650300 (446 aa).

Over 1 to 30 (MKLPLLRPLWPMLSPAAGSPDSPPEPSKPS) the chain is Cytoplasmic. Residues 31–51 (LPAAWLLLHALFCATSMAVGF) traverse the membrane as a helical; Signal-anchor for type II membrane protein segment. The Lumenal portion of the chain corresponds to 52–446 (RFSRLIVYLL…TTLLNTEGQH (395 aa)). N-linked (GlcNAc...) asparagine glycosylation occurs at Asn87. Residues 425–446 (QQDAKPETPLKRTTLLNTEGQH) form a disordered region.

Belongs to the glycosyltransferase 43 family.

It is found in the golgi apparatus membrane. Functionally, involved in the synthesis of glucuronoxylan hemicellulose in secondary cell walls. The sequence is that of Probable glucuronosyltransferase Os04g0650300 from Oryza sativa subsp. japonica (Rice).